The primary structure comprises 337 residues: 4-hydroxyproline 2-epimerase (337 aa).

The active-site Proton acceptor is C91. Residues 92 to 93, D252, and 257 to 258 contribute to the substrate site; these read GH and GT.

This sequence belongs to the proline racemase family.

It catalyses the reaction trans-4-hydroxy-L-proline = cis-4-hydroxy-D-proline. Its function is as follows. Catalyzes the epimerization of trans-4-hydroxy-L-proline (t4LHyp) to cis-4-hydroxy-D-proline (c4DHyp). Is involved in a degradation pathway that converts t4LHyp to alpha-ketoglutarate, which allows R.sphaeroides to grow on t4LHyp as a sole carbon source. Displays no proline racemase activity. This chain is 4-hydroxyproline 2-epimerase, found in Cereibacter sphaeroides (strain ATCC 17023 / DSM 158 / JCM 6121 / CCUG 31486 / LMG 2827 / NBRC 12203 / NCIMB 8253 / ATH 2.4.1.) (Rhodobacter sphaeroides).